The sequence spans 594 residues: Proteasome-associated ATPase (594 aa).

The segment covering 1 to 12 has biased composition (polar residues); sequence MTETSANKPENT. The disordered stretch occupies residues 1–20; that stretch reads MTETSANKPENTQAHEGRDY. Residues 18–71 adopt a coiled-coil conformation; it reads RDYSVLERQFNVLRDKLRNVDRQLAAATQNNTKMTTTLQSAKAEILRLKSALEK. Position 282-287 (282-287) interacts with ATP; the sequence is GCGKTL. A docks into pockets in the proteasome alpha-ring region spans residues 593–594; it reads YL.

Belongs to the AAA ATPase family. As to quaternary structure, homohexamer. Assembles into a hexameric ring structure that caps the 20S proteasome core. Strongly interacts with the prokaryotic ubiquitin-like protein Pup through a hydrophobic interface; the interacting region of ARC lies in its N-terminal coiled-coil domain. There is one Pup binding site per ARC hexamer ring. Upon ATP-binding, the C-terminus of ARC interacts with the alpha-rings of the proteasome core, possibly by binding to the intersubunit pockets.

The protein operates within protein degradation; proteasomal Pup-dependent pathway. Its function is as follows. ATPase which is responsible for recognizing, binding, unfolding and translocation of pupylated proteins into the bacterial 20S proteasome core particle. May be essential for opening the gate of the 20S proteasome via an interaction with its C-terminus, thereby allowing substrate entry and access to the site of proteolysis. Thus, the C-termini of the proteasomal ATPase may function like a 'key in a lock' to induce gate opening and therefore regulate proteolysis. This Renibacterium salmoninarum (strain ATCC 33209 / DSM 20767 / JCM 11484 / NBRC 15589 / NCIMB 2235) protein is Proteasome-associated ATPase.